The sequence spans 419 residues: Glutamyl-tRNA reductase (419 aa).

Substrate is bound by residues 49 to 52, S107, 112 to 114, and Q118; these read TCNR and EPQ. C50 (nucleophile) is an active-site residue. 187–192 is a binding site for NADP(+); that stretch reads GAGETI.

It belongs to the glutamyl-tRNA reductase family. As to quaternary structure, homodimer.

It catalyses the reaction (S)-4-amino-5-oxopentanoate + tRNA(Glu) + NADP(+) = L-glutamyl-tRNA(Glu) + NADPH + H(+). The protein operates within porphyrin-containing compound metabolism; protoporphyrin-IX biosynthesis; 5-aminolevulinate from L-glutamyl-tRNA(Glu): step 1/2. Its function is as follows. Catalyzes the NADPH-dependent reduction of glutamyl-tRNA(Glu) to glutamate 1-semialdehyde (GSA). In Vibrio atlanticus (strain LGP32) (Vibrio splendidus (strain Mel32)), this protein is Glutamyl-tRNA reductase.